The primary structure comprises 163 residues: NADH-quinone oxidoreductase subunit I (163 aa).

2 4Fe-4S ferredoxin-type domains span residues L53–G83 and V94–N123. Positions 63, 66, 69, 73, 103, 106, 109, and 113 each coordinate [4Fe-4S] cluster.

Belongs to the complex I 23 kDa subunit family. In terms of assembly, NDH-1 is composed of 14 different subunits. Subunits NuoA, H, J, K, L, M, N constitute the membrane sector of the complex. The cofactor is [4Fe-4S] cluster.

It localises to the cell inner membrane. The catalysed reaction is a quinone + NADH + 5 H(+)(in) = a quinol + NAD(+) + 4 H(+)(out). NDH-1 shuttles electrons from NADH, via FMN and iron-sulfur (Fe-S) centers, to quinones in the respiratory chain. The immediate electron acceptor for the enzyme in this species is believed to be ubiquinone. Couples the redox reaction to proton translocation (for every two electrons transferred, four hydrogen ions are translocated across the cytoplasmic membrane), and thus conserves the redox energy in a proton gradient. The polypeptide is NADH-quinone oxidoreductase subunit I (Bartonella bacilliformis (strain ATCC 35685 / KC583 / Herrer 020/F12,63)).